The sequence spans 332 residues: Ribosomal RNA small subunit methyltransferase H (332 aa).

S-adenosyl-L-methionine contacts are provided by residues 38–40, Asp56, Phe83, Asp104, and Gln111; that span reads GGY. The disordered stretch occupies residues 309–332; that stretch reads TETPFSEDISRPDTHIPRSRRQSA.

Belongs to the methyltransferase superfamily. RsmH family.

It is found in the cytoplasm. It carries out the reaction cytidine(1402) in 16S rRNA + S-adenosyl-L-methionine = N(4)-methylcytidine(1402) in 16S rRNA + S-adenosyl-L-homocysteine + H(+). Specifically methylates the N4 position of cytidine in position 1402 (C1402) of 16S rRNA. This chain is Ribosomal RNA small subunit methyltransferase H, found in Zymomonas mobilis subsp. mobilis (strain ATCC 31821 / ZM4 / CP4).